A 2457-amino-acid polypeptide reads, in one-letter code: Large tegument protein deneddylase (2457 aa).

Positions 1-234 (MALPASLAGF…SDLHGSKIIL (234 aa)) are deubiquitination activity. One can recognise a Peptidase C76 domain in the interval 13–224 (EGTASTNQAD…IMSHYKVISF (212 aa)). Residues cysteine 33, aspartate 163, and histidine 165 contribute to the active site. 4 disordered regions span residues 281–350 (EEWT…LPSV), 2064–2131 (ITEG…PIIP), 2164–2360 (GHSG…PQPQ), and 2387–2407 (GMSD…GVTH). Residues 293-302 (SGRTPPEKMT) show a composition bias toward basic and acidic residues. Positions 314-334 (TMDDDVIDLTGDDDMEDESEG) are enriched in acidic residues. Residues 2080–2091 (TQDHMEEPDNKQ) show a composition bias toward basic and acidic residues. Over residues 2115-2131 (SPSPSPPVLTPIKPIIP) the composition is skewed to pro residues. Polar residues predominate over residues 2173–2186 (HIQSSTPGPAQNTR). Over residues 2387 to 2398 (GMSDDKNPEPCV) the composition is skewed to basic and acidic residues.

It belongs to the herpesviridae large tegument protein family. As to quaternary structure, interacts with host CUL1 and CUL4A; these interactions inhibit the E3 ligase activity of cullins. Interacts with inner tegument protein. Interacts with capsid vertex specific component CVC2. Interacts with the major capsid protein/MCP.

It localises to the virion tegument. It is found in the host cytoplasm. The protein resides in the host nucleus. It catalyses the reaction Thiol-dependent hydrolysis of ester, thioester, amide, peptide and isopeptide bonds formed by the C-terminal Gly of ubiquitin (a 76-residue protein attached to proteins as an intracellular targeting signal).. In terms of biological role, large tegument protein that plays multiple roles in the viral cycle. During viral entry, remains associated with the capsid while most of the tegument is detached and participates in the capsid transport toward the host nucleus. Plays a role in the routing of the capsid at the nuclear pore complex and subsequent uncoating. Within the host nucleus, acts as a deneddylase and promotes the degradation of nuclear CRLs (cullin-RING ubiquitin ligases) and thereby stabilizes nuclear CRL substrates, while cytoplasmic CRLs remain unaffected. These modifications prevent host cell cycle S-phase progression and create a favorable environment allowing efficient viral genome replication. Participates later in the secondary envelopment of capsids. Indeed, plays a linker role for the association of the outer viral tegument to the capsids together with the inner tegument protein. This is Large tegument protein deneddylase from Apodemus sylvaticus (European woodmouse).